The chain runs to 49 residues: Large ribosomal subunit protein bL33A (49 aa).

The protein belongs to the bacterial ribosomal protein bL33 family.

The sequence is that of Large ribosomal subunit protein bL33A from Bacillus cytotoxicus (strain DSM 22905 / CIP 110041 / 391-98 / NVH 391-98).